The following is a 293-amino-acid chain: Bifunctional protein FolD (293 aa).

NADP(+)-binding positions include 165 to 167 (GRS), serine 190, and isoleucine 231.

This sequence belongs to the tetrahydrofolate dehydrogenase/cyclohydrolase family. In terms of assembly, homodimer.

It catalyses the reaction (6R)-5,10-methylene-5,6,7,8-tetrahydrofolate + NADP(+) = (6R)-5,10-methenyltetrahydrofolate + NADPH. It carries out the reaction (6R)-5,10-methenyltetrahydrofolate + H2O = (6R)-10-formyltetrahydrofolate + H(+). Its pathway is one-carbon metabolism; tetrahydrofolate interconversion. Functionally, catalyzes the oxidation of 5,10-methylenetetrahydrofolate to 5,10-methenyltetrahydrofolate and then the hydrolysis of 5,10-methenyltetrahydrofolate to 10-formyltetrahydrofolate. In Synechococcus sp. (strain WH7803), this protein is Bifunctional protein FolD.